Consider the following 234-residue polypeptide: Adenosine 5'-phosphosulfate reductase (234 aa).

Positions 120, 121, 203, and 206 each coordinate [4Fe-4S] cluster. Cys-229 functions as the Nucleophile; cysteine thiosulfonate intermediate in the catalytic mechanism.

Belongs to the PAPS reductase family. CysH subfamily. Requires [4Fe-4S] cluster as cofactor.

The protein localises to the cytoplasm. It catalyses the reaction [thioredoxin]-disulfide + sulfite + AMP + 2 H(+) = adenosine 5'-phosphosulfate + [thioredoxin]-dithiol. Its pathway is sulfur metabolism; hydrogen sulfide biosynthesis; sulfite from sulfate. Functionally, catalyzes the formation of sulfite from adenosine 5'-phosphosulfate (APS) using thioredoxin as an electron donor. The chain is Adenosine 5'-phosphosulfate reductase from Bacillus thuringiensis (strain Al Hakam).